The chain runs to 230 residues: Demethylmenaquinone methyltransferase (230 aa).

S-adenosyl-L-methionine contacts are provided by residues Thr62, Asp80, 100-101 (DA), and Ser117.

This sequence belongs to the class I-like SAM-binding methyltransferase superfamily. MenG/UbiE family.

The enzyme catalyses a 2-demethylmenaquinol + S-adenosyl-L-methionine = a menaquinol + S-adenosyl-L-homocysteine + H(+). It participates in quinol/quinone metabolism; menaquinone biosynthesis; menaquinol from 1,4-dihydroxy-2-naphthoate: step 2/2. Methyltransferase required for the conversion of demethylmenaquinol (DMKH2) to menaquinol (MKH2). This chain is Demethylmenaquinone methyltransferase, found in Mycolicibacterium paratuberculosis (strain ATCC BAA-968 / K-10) (Mycobacterium paratuberculosis).